Reading from the N-terminus, the 520-residue chain is MTLREEVEIRKTFAIISHPDAGKTTLTEKLLLFGGAIREAGTVKGKKTGKFATSDWMEVEKQRGISVTSSVMQFDYDNFKINILDTPGHEDFSEDTYRTLMAVDSAVMVIDCAKGIEPQTLKLFKVCKMRGIPIFTFINKLDRVGKEPFELLEEIEKTLEIETYPMNWPIGMGQSFFGIIDRKTKTIEPFRDEENVLHLNEDYELQESHAITSDSAYEQAIEELMLVDEAGETFDKEKLMTGDLTPVFFGSALANFGVQNFLNAYVDHAPMPSGRKTESGEEISPFDESFSGFIFKIQANMNPQHRDRIAFMRIVSGAFERGMDIKMTRTDKKMKISRSTSFMADDTQTVNHAVSGDIIGLYDSGNFQIGDTLVGGNQKFQFEKLPQFTPEIFMKVSPKNVMKQKHFHKGIEQLVQEGAIQLYRTLHTNQIILGAVGQLQFEVFEHRMNNEYNVDVIMEPVGRKIARWIENEADIRDAMNSSRSILVEDRFENKVFLFENEFATRWFLDKFPEIKLYSLL.

A tr-type G domain is found at 8–273 (EIRKTFAIIS…AYVDHAPMPS (266 aa)). GTP contacts are provided by residues 17–24 (SHPDAGKT), 85–89 (DTPGH), and 139–142 (NKLD).

It belongs to the TRAFAC class translation factor GTPase superfamily. Classic translation factor GTPase family. PrfC subfamily.

The protein localises to the cytoplasm. Functionally, increases the formation of ribosomal termination complexes and stimulates activities of RF-1 and RF-2. It binds guanine nucleotides and has strong preference for UGA stop codons. It may interact directly with the ribosome. The stimulation of RF-1 and RF-2 is significantly reduced by GTP and GDP, but not by GMP. This Macrococcus caseolyticus (strain JCSC5402) (Macrococcoides caseolyticum) protein is Peptide chain release factor 3.